We begin with the raw amino-acid sequence, 329 residues long: Putative HTH-type transcriptional regulatory protein APE_0778 (329 aa).

One can recognise an HTH cro/C1-type domain in the interval 142–200; sequence LREKRLEKGLSLGHLAYMLKTSRKSIYEYERGVMSPSVEKAEKLVDILGEEILEPIDIL. Residues 153 to 172 constitute a DNA-binding region (H-T-H motif); that stretch reads LGHLAYMLKTSRKSIYEYER.

The polypeptide is Putative HTH-type transcriptional regulatory protein APE_0778 (Aeropyrum pernix (strain ATCC 700893 / DSM 11879 / JCM 9820 / NBRC 100138 / K1)).